Reading from the N-terminus, the 373-residue chain is Histidinol-phosphate aminotransferase (373 aa).

An N6-(pyridoxal phosphate)lysine modification is found at K231.

It belongs to the class-II pyridoxal-phosphate-dependent aminotransferase family. Histidinol-phosphate aminotransferase subfamily. Pyridoxal 5'-phosphate serves as cofactor.

The enzyme catalyses L-histidinol phosphate + 2-oxoglutarate = 3-(imidazol-4-yl)-2-oxopropyl phosphate + L-glutamate. The protein operates within amino-acid biosynthesis; L-histidine biosynthesis; L-histidine from 5-phospho-alpha-D-ribose 1-diphosphate: step 7/9. This chain is Histidinol-phosphate aminotransferase (hisC), found in Methanocaldococcus jannaschii (strain ATCC 43067 / DSM 2661 / JAL-1 / JCM 10045 / NBRC 100440) (Methanococcus jannaschii).